Consider the following 279-residue polypeptide: Fatty acid desaturase 4-like 2, chloroplastic (279 aa).

The N-terminal 30 residues, 1–30, are a transit peptide targeting the chloroplast; it reads MATSLQTKYTLNPITNNIPRSHRPSFLRVT. 3 helical membrane passes run 68–90, 98–118, and 178–198; these read LWVAAGCTTVFVSFSKSIIGAFG, SLAGFAGYILADLGSGVYHWA, and VVHGFVSMFAFCVLFCQLFHA.

This sequence belongs to the fatty acid desaturase CarF family.

It localises to the plastid. It is found in the chloroplast membrane. It participates in lipid metabolism; fatty acid metabolism. Its function is as follows. Fatty acid desaturase involved in the production of chloroplast-specific phosphatidylglycerol molecular species. Catalyzes the formation of a trans double bond introduced close to the carboxyl group of palmitic acid, which is specifically esterified to the sn-2 glyceryl carbon of phosphatidylglycerol. This is Fatty acid desaturase 4-like 2, chloroplastic (FAD4L2) from Arabidopsis thaliana (Mouse-ear cress).